The sequence spans 384 residues: Putative glutamate--cysteine ligase 2 (384 aa).

This sequence belongs to the glutamate--cysteine ligase type 2 family. YbdK subfamily.

The catalysed reaction is L-cysteine + L-glutamate + ATP = gamma-L-glutamyl-L-cysteine + ADP + phosphate + H(+). Functionally, ATP-dependent carboxylate-amine ligase which exhibits weak glutamate--cysteine ligase activity. The chain is Putative glutamate--cysteine ligase 2 from Ruegeria pomeroyi (strain ATCC 700808 / DSM 15171 / DSS-3) (Silicibacter pomeroyi).